The following is a 287-amino-acid chain: MDMHSARLDSFLSQLRWELLCGRDTGSPSMPGPLQPTSQTGPDVQPSHQLRASGALEEDSVCCVEEEEEEEEEAVVTEDRDAALGGPREHALDWDSGFSEVSGSTWREEELPVSQRPAPSAQPLRRQCLSVSGLPMPSRAPVASVPPVHHPRPKSTPDACLEHWQGLEAEDWTAALLNRGRSRQPLVLGDNCFADLVHNWMELPETGSEGGDGGGHRARARPPQFLLGLSEQLRRRLARARRTAMAGKRLSCPPRPEPELPADVSRFAALMSCRSRQPIICNDVSYL.

2 disordered regions span residues 22-59 (GRDT…LEED) and 138-157 (SRAP…KSTP). The span at 35–50 (QPTSQTGPDVQPSHQL) shows a compositional bias: polar residues. A compositionally biased stretch (low complexity) spans 138–147 (SRAPVASVPP). Inka box regions lie at residues 168–205 (EAED…ELPE) and 261–287 (PADV…VSYL).

It belongs to the INKA family. As to quaternary structure, interacts with PAK4.

Its subcellular location is the nucleus. The protein resides in the cytoplasm. In terms of biological role, inhibitor of the serine/threonine-protein kinase PAK4. Acts by binding PAK4 in a substrate-like manner, inhibiting the protein kinase activity. The polypeptide is PAK4-inhibitor INKA1 (Homo sapiens (Human)).